A 24-amino-acid chain; its full sequence is General odorant-binding protein (24 aa).

The protein belongs to the PBP/GOBP family. In terms of assembly, homodimer. As to expression, antenna.

Functionally, present in the aqueous fluid surrounding olfactory sensory dendrites and are thought to aid in the capture and transport of hydrophobic odorants into and through this fluid. This chain is General odorant-binding protein, found in Antheraea polyphemus (Polyphemus moth).